We begin with the raw amino-acid sequence, 580 residues long: Acyl--CoA ligase GME11374 (580 aa).

It belongs to the ATP-dependent AMP-binding enzyme family.

It functions in the pathway secondary metabolite biosynthesis. Acyl--CoA ligase; part of the gene cluster that mediates the biosynthesis of dibenzodioxocinones such as pestalotiollide B, a novel class of inhibitors against cholesterol ester transfer protein (CEPT). The biosynthesis initiates from condensation of acetate and malonate units catalyzed by the non-reducing PKS pks8/GME11356. Pks8/GME11356 lacks a thioesterase (TE) domain, which is important to the cyclizing of the third ring of atrochrysone carboxylic acid, and the esterase GME11355 might play the role of TE and catalyzes the cyclization reaction of the C ring. The lactamase-like protein GME11357 (or other beta-lactamases in Pestalotiopsis microspora) probably hydrolyzes the thioester bond between the ACP of pks8/GME11356 and the intermediate to release atrochrysone carboxylic acid, which is spontaneously dehydrates to form endocrocin anthrone. Endocrocin anthrone is further converted to emodin via the endocrocin intermediate. Emodin is then oxidized by several enzymes such as the Baeyer-Villiger oxidase GME11358, the oxidoreductase GME11367, the short chain dehydrogenase/reductase GME11373, as well as by other oxidoreductases from the cluster, to modify the A and C rings and open the B ring, and finally yield monodictyphenone. The prenyltransferase GME11375 may catalyze the addition reaction between the C5 side chains and the carbon bone of dibenzodioxocinones. The remaining biochemical reactions to the final product dibenzodioxocinones should be methylation catalyzed by methyltransferase GME11366 and reduction and lactonization reaction catalyzed by a series of oxidordeuctases. This chain is Acyl--CoA ligase GME11374, found in Pestalotiopsis microspora.